The sequence spans 276 residues: Putative metal-binding protein CT_415 (276 aa).

Residues 1-18 (MRLLFLLLFSLGITCSYG) form the signal peptide. Residues H59, H121, H185, and D256 each contribute to the a divalent metal cation site.

It belongs to the bacterial solute-binding protein 9 family.

It localises to the periplasm. Part of an ATP-binding cassette (ABC) transport system involved in metal import. Binds a metal with high affinity and specificity and delivers it to the membrane permease for translocation into the cytoplasm. The sequence is that of Putative metal-binding protein CT_415 from Chlamydia trachomatis serovar D (strain ATCC VR-885 / DSM 19411 / UW-3/Cx).